A 241-amino-acid chain; its full sequence is Folate receptor alpha (241 aa).

Positions 1–19 (MAWQMTQLLLLALVAAAWG) are cleaved as a signal peptide. 8 disulfides stabilise this stretch: Cys36–Cys64, Cys56–Cys104, Cys65–Cys108, Cys88–Cys174, Cys95–Cys145, Cys134–Cys208, Cys138–Cys188, and Cys151–Cys168. An N-linked (GlcNAc...) asparagine glycan is attached at Asn68. Folate is bound by residues Asp102, Tyr106, 123-127 (WRKER), 156-161 (HKGWNW), and Ser195. The N-linked (GlcNAc...) asparagine glycan is linked to Asn160. Ser234 is lipidated: GPI-anchor amidated serine. A propeptide spans 235–241 (GSTPQGI) (removed in mature form).

It belongs to the folate receptor family. In terms of processing, the secreted form is derived from the membrane-bound form either by cleavage of the GPI anchor, or/and by proteolysis catalyzed by a metalloprotease. Detected in milk (at protein level).

Its subcellular location is the cell membrane. It localises to the apical cell membrane. The protein resides in the basolateral cell membrane. The protein localises to the secreted. It is found in the cytoplasmic vesicle. Its subcellular location is the clathrin-coated vesicle. It localises to the endosome. Binds to folate and reduced folic acid derivatives and mediates delivery of 5-methyltetrahydrofolate and folate analogs into the interior of cells. Has high affinity for folate and folic acid analogs at neutral pH. Exposure to slightly acidic pH after receptor endocytosis triggers a conformation change that strongly reduces its affinity for folates and mediates their release. Required for normal embryonic development and normal cell proliferation. This Bos taurus (Bovine) protein is Folate receptor alpha (FOLR1).